A 210-amino-acid polypeptide reads, in one-letter code: Dephospho-CoA kinase (210 aa).

In terms of domain architecture, DPCK spans 15-210 (VLGLTGGIGC…HKGYLKLALK (196 aa)). 23 to 28 (GCGKTA) contacts ATP.

Belongs to the CoaE family.

It is found in the cytoplasm. It carries out the reaction 3'-dephospho-CoA + ATP = ADP + CoA + H(+). It participates in cofactor biosynthesis; coenzyme A biosynthesis; CoA from (R)-pantothenate: step 5/5. In terms of biological role, catalyzes the phosphorylation of the 3'-hydroxyl group of dephosphocoenzyme A to form coenzyme A. This is Dephospho-CoA kinase from Pseudoalteromonas translucida (strain TAC 125).